Reading from the N-terminus, the 1110-residue chain is Coiled-coil domain-containing protein 150 (1110 aa).

4 coiled-coil regions span residues 122-250 (LENL…TSAS), 288-313 (QDLL…SDLN), 413-695 (AAHA…KEDN), and 728-1048 (SEIA…EAHR).

The polypeptide is Coiled-coil domain-containing protein 150 (Ccdc150) (Mus musculus (Mouse)).